Consider the following 490-residue polypeptide: Ketol-acid reductoisomerase (NADP(+)) (490 aa).

The KARI N-terminal Rossmann domain maps to 17–208 (LAQCEFMNAD…GGHRAGVLKS (192 aa)). NADP(+) is bound by residues 45–48 (CGAQ), Arg-68, Arg-76, Ser-78, and 108–110 (DKQ). His-132 is a catalytic residue. NADP(+) is bound at residue Gly-158. KARI C-terminal knotted domains lie at 209–353 (SFIA…AEQE) and 355–486 (FDNG…MSAM). Mg(2+) contacts are provided by Asp-217, Glu-221, Glu-389, and Glu-393. Ser-414 is a substrate binding site.

The protein belongs to the ketol-acid reductoisomerase family. Mg(2+) is required as a cofactor.

The enzyme catalyses (2R)-2,3-dihydroxy-3-methylbutanoate + NADP(+) = (2S)-2-acetolactate + NADPH + H(+). It carries out the reaction (2R,3R)-2,3-dihydroxy-3-methylpentanoate + NADP(+) = (S)-2-ethyl-2-hydroxy-3-oxobutanoate + NADPH + H(+). The protein operates within amino-acid biosynthesis; L-isoleucine biosynthesis; L-isoleucine from 2-oxobutanoate: step 2/4. Its pathway is amino-acid biosynthesis; L-valine biosynthesis; L-valine from pyruvate: step 2/4. Its function is as follows. Involved in the biosynthesis of branched-chain amino acids (BCAA). Catalyzes an alkyl-migration followed by a ketol-acid reduction of (S)-2-acetolactate (S2AL) to yield (R)-2,3-dihydroxy-isovalerate. In the isomerase reaction, S2AL is rearranged via a Mg-dependent methyl migration to produce 3-hydroxy-3-methyl-2-ketobutyrate (HMKB). In the reductase reaction, this 2-ketoacid undergoes a metal-dependent reduction by NADPH to yield (R)-2,3-dihydroxy-isovalerate. This chain is Ketol-acid reductoisomerase (NADP(+)), found in Pseudoalteromonas translucida (strain TAC 125).